A 340-amino-acid polypeptide reads, in one-letter code: Guanine nucleotide-binding protein G(I)/G(S)/G(T) subunit beta-1 (340 aa).

N-acetylserine is present on Ser-2. A Phosphoserine modification is found at Ser-2. WD repeat units lie at residues Arg-46 to Pro-94, Leu-95 to Ala-140, Gly-141 to Thr-181, Gly-182 to Thr-223, Gly-224 to Asp-267, Asn-268 to Ala-309, and Gly-310 to Asn-340. At His-266 the chain carries Phosphohistidine.

The protein belongs to the WD repeat G protein beta family. As to quaternary structure, g proteins are composed of 3 units, alpha, beta and gamma. The heterodimer formed by GNB1 and GNG2 interacts with ARHGEF5. The heterodimer formed by GNB1 and GNG2 interacts with GRK2. Forms a complex with GNAO1 and GNG3. Interacts with ARHGEF18 and RASD2. Forms complexes with TAS2R14 and G-proteins; these complexes play a role in the perception of bitterness. Component of the TAS2R14-GNAI1 complex, consisting of TAS2R14, GNAI1, GNB1 and GNG2. Component of the TAS2R14-GNAT3 complex, consisting of TAS2R14, GNAT3, GNB1 and GNG2. Component of the TAS2R14-GNAS2 complex, consisting of TAS2R14, GNAS2, GNB1 and GNG2. Phosphorylation at His-266 by NDKB contributes to G protein activation by increasing the high energetic phosphate transfer onto GDP.

Guanine nucleotide-binding proteins (G proteins) are involved as a modulator or transducer in various transmembrane signaling systems. The beta and gamma chains are required for the GTPase activity, for replacement of GDP by GTP, and for G protein-effector interaction. The protein is Guanine nucleotide-binding protein G(I)/G(S)/G(T) subunit beta-1 (GNB1) of Bos taurus (Bovine).